The following is a 394-amino-acid chain: Putative agmatinase 1 (394 aa).

A signal peptide spans 1 to 20 (MALQSLFLILLAGAAQLAQA). The Mn(2+) site is built by His186, Asp209, His211, Asp213, Asp307, and Asp309.

Belongs to the arginase family. Mn(2+) is required as a cofactor.

It carries out the reaction agmatine + H2O = urea + putrescine. The protein is Putative agmatinase 1 of Schizosaccharomyces pombe (strain 972 / ATCC 24843) (Fission yeast).